A 718-amino-acid polypeptide reads, in one-letter code: Coiled-coil domain-containing protein 157 (718 aa).

Residues 300–603 (LRAQLEDAEG…LTKIREVAQQ (304 aa)) are a coiled coil. The segment covering 469 to 482 (RGSLDEAEAQRSEL) has biased composition (basic and acidic residues). Disordered stretches follow at residues 469–490 (RGSLDEAEAQRSELEEQLQSLQ) and 617–690 (PPYK…TQNP). A compositionally biased stretch (low complexity) spans 639-659 (TGRRQSPGSRTSSTGRTHPGG).

This is Coiled-coil domain-containing protein 157 (Ccdc157) from Mus musculus (Mouse).